Here is a 251-residue protein sequence, read N- to C-terminus: Large ribosomal subunit protein uL3 (251 aa).

2 disordered regions span residues 140–162 (SHRSIGSTGGRQDPGKTFKNKKM) and 229–251 (AAPAGAVQAAQAAPEAPAAEENA). Gln151 bears the N5-methylglutamine mark.

The protein belongs to the universal ribosomal protein uL3 family. In terms of assembly, part of the 50S ribosomal subunit. Forms a cluster with proteins L14 and L19. Methylated by PrmB.

Its function is as follows. One of the primary rRNA binding proteins, it binds directly near the 3'-end of the 23S rRNA, where it nucleates assembly of the 50S subunit. In Methylobacterium nodulans (strain LMG 21967 / CNCM I-2342 / ORS 2060), this protein is Large ribosomal subunit protein uL3.